Reading from the N-terminus, the 302-residue chain is Stanniocalcin-2 (302 aa).

The signal sequence occupies residues 1–24 (MCAERLGQFMTLALVLATFDPARG). Positions 23–44 (RGTDATNPPEGPQDRSPQQKGR) are disordered. N-linked (GlcNAc...) asparagine glycans are attached at residues asparagine 73 and asparagine 74. The disordered stretch occupies residues 217 to 302 (RPPTAPPERQ…EQSEYSDIRR (86 aa)). The segment covering 227–264 (PQVDRTKLSRAHHGEAGHHLPEPSSRETGRGAKGERGS) has biased composition (basic and acidic residues). Phosphoserine is present on residues serine 250 and serine 251. The residue at position 254 (threonine 254) is a Phosphothreonine.

It belongs to the stanniocalcin family. In terms of assembly, homodimer; disulfide-linked.

Its subcellular location is the secreted. Functionally, has an anti-hypocalcemic action on calcium and phosphate homeostasis. In Pongo abelii (Sumatran orangutan), this protein is Stanniocalcin-2 (STC2).